A 456-amino-acid chain; its full sequence is Phosphatidylinositol N-acetylglucosaminyltransferase gpi3 subunit (456 aa).

Belongs to the glycosyltransferase group 1 family. Glycosyltransferase 4 subfamily. In terms of assembly, component of a Phosphatidylinositol N-acetylglucosaminyltransferase complex.

It carries out the reaction a 1,2-diacyl-sn-glycero-3-phospho-(1D-myo-inositol) + UDP-N-acetyl-alpha-D-glucosamine = a 6-(N-acetyl-alpha-D-glucosaminyl)-1-(1,2-diacyl-sn-glycero-3-phospho)-1D-myo-inositol + UDP + H(+). The protein operates within glycolipid biosynthesis; glycosylphosphatidylinositol-anchor biosynthesis. Functionally, catalytic subunit in the complex catalyzing the transfer of N-acetylglucosamine from UDP-N-acetylglucosamine to phosphatidylinositol, the first step of GPI biosynthesis. This chain is Phosphatidylinositol N-acetylglucosaminyltransferase gpi3 subunit (gpi3), found in Schizosaccharomyces pombe (strain 972 / ATCC 24843) (Fission yeast).